A 240-amino-acid chain; its full sequence is ATP-dependent dethiobiotin synthetase BioD (240 aa).

Residue 15–20 (EIGKTF) coordinates ATP. Position 19 (Thr-19) interacts with Mg(2+). Lys-40 is a catalytic residue. ATP is bound by residues Asp-57, 118–121 (EGVG), and 178–179 (NR). Residues Asp-57 and Glu-118 each coordinate Mg(2+).

It belongs to the dethiobiotin synthetase family. Homodimer. Mg(2+) is required as a cofactor.

It localises to the cytoplasm. The catalysed reaction is (7R,8S)-7,8-diammoniononanoate + CO2 + ATP = (4R,5S)-dethiobiotin + ADP + phosphate + 3 H(+). It functions in the pathway cofactor biosynthesis; biotin biosynthesis; biotin from 7,8-diaminononanoate: step 1/2. Its function is as follows. Catalyzes a mechanistically unusual reaction, the ATP-dependent insertion of CO2 between the N7 and N8 nitrogen atoms of 7,8-diaminopelargonic acid (DAPA, also called 7,8-diammoniononanoate) to form a ureido ring. The sequence is that of ATP-dependent dethiobiotin synthetase BioD from Burkholderia mallei (strain NCTC 10247).